Consider the following 350-residue polypeptide: Protein-glutamate methylesterase/protein-glutamine glutaminase 1 (350 aa).

The 116-residue stretch at 1-116 (MVVDDSAVVR…KGFLHDSAKV (116 aa)) folds into the Response regulatory domain. Position 50 is a 4-aspartylphosphate (D50). In terms of domain architecture, CheB-type methylesterase spans 160 to 350 (LKTTEQLVAI…IPQAILDCSH (191 aa)). Active-site residues include S172, H198, and D294.

The protein belongs to the CheB family. Phosphorylated by CheA. Phosphorylation of the N-terminal regulatory domain activates the methylesterase activity.

Its subcellular location is the cytoplasm. The enzyme catalyses [protein]-L-glutamate 5-O-methyl ester + H2O = L-glutamyl-[protein] + methanol + H(+). It carries out the reaction L-glutaminyl-[protein] + H2O = L-glutamyl-[protein] + NH4(+). Involved in chemotaxis. Part of a chemotaxis signal transduction system that modulates chemotaxis in response to various stimuli. Catalyzes the demethylation of specific methylglutamate residues introduced into the chemoreceptors (methyl-accepting chemotaxis proteins or MCP) by CheR. Also mediates the irreversible deamidation of specific glutamine residues to glutamic acid. This Photobacterium profundum (strain SS9) protein is Protein-glutamate methylesterase/protein-glutamine glutaminase 1.